Consider the following 229-residue polypeptide: Serine acetyltransferase (229 aa).

The protein belongs to the transferase hexapeptide repeat family.

Its subcellular location is the cytoplasm. It catalyses the reaction L-serine + acetyl-CoA = O-acetyl-L-serine + CoA. It functions in the pathway amino-acid biosynthesis; L-cysteine biosynthesis; L-cysteine from L-serine: step 1/2. Functionally, catalyzes the acetylation of serine by acetyl-CoA to produce O-acetylserine (OAS). The sequence is that of Serine acetyltransferase (cysE) from Mycobacterium tuberculosis (strain ATCC 25618 / H37Rv).